The sequence spans 774 residues: Polymerase basic protein 2 (774 aa).

It belongs to the influenza viruses PB2 family. As to quaternary structure, influenza RNA polymerase is composed of three subunits: PB1, PB2 and PA. Interacts (via N-terminus) with PB1 (via C-terminus). Interacts with nucleoprotein NP (via N-terminus). Interacts with host ANP32A (via C-terminus); this interaction promotes viral RNA synthesis.

The protein resides in the virion. Its subcellular location is the host nucleus. In terms of biological role, plays an essential role in transcription initiation and cap-stealing mechanism, in which cellular capped pre-mRNAs are used to generate primers for viral transcription. Recognizes and binds a wide range of cap structures of target pre-RNAs which are subsequently cleaved after 10-13 nucleotides by the viral protein PA. Plays a role in the initiation of the viral genome replication and modulates the activity of the ribonucleoprotein (RNP) complex. In Influenza C virus (strain C/Johannesburg/1/1966), this protein is Polymerase basic protein 2.